The following is a 270-amino-acid chain: Cytosolic Fe-S cluster assembly factor NUBP2 homolog (270 aa).

21 to 28 (GKGGVGKS) lines the ATP pocket. 2 residues coordinate [4Fe-4S] cluster: Cys195 and Cys198.

This sequence belongs to the Mrp/NBP35 ATP-binding proteins family. NUBP2/CFD1 subfamily. Heterotetramer of 2 NUBP1 and 2 NUBP2 chains. It depends on [4Fe-4S] cluster as a cofactor.

Its subcellular location is the cytoplasm. In terms of biological role, component of the cytosolic iron-sulfur (Fe/S) protein assembly (CIA) machinery. Required for maturation of extramitochondrial Fe-S proteins. The NUBP1-NUBP2 heterotetramer forms a Fe-S scaffold complex, mediating the de novo assembly of an Fe-S cluster and its transfer to target apoproteins. The protein is Cytosolic Fe-S cluster assembly factor NUBP2 homolog of Nematostella vectensis (Starlet sea anemone).